The chain runs to 486 residues: Arginine deiminase (486 aa).

The active-site Amidino-cysteine intermediate is Cys-476.

It belongs to the arginine deiminase family.

Its subcellular location is the cytoplasm. It catalyses the reaction L-arginine + H2O = L-citrulline + NH4(+). The protein operates within amino-acid degradation; L-arginine degradation via ADI pathway; carbamoyl phosphate from L-arginine: step 1/2. Its function is as follows. Involved in the arginine deiminase pathway of fermentative arginine utilization. The chain is Arginine deiminase (arcA) from Halobacterium salinarum (strain ATCC 29341 / DSM 671 / R1).